Consider the following 701-residue polypeptide: Aryl hydrocarbon receptor repressor (701 aa).

The tract at residues 1–38 (MMIPSGECTYAGRKRRKPIQKRRLTMGTEKSNPSKRHR) is disordered. Positions 12–24 (GRKRRKPIQKRRL) are enriched in basic residues. The 54-residue stretch at 25–78 (TMGTEKSNPSKRHRDRLNTELDHLASLLPFSPDIISKLDKLSVLRLSVSYLRVK) folds into the bHLH domain. The region spanning 106–176 (PVQEGRLLLE…RQLHWAMDPP (71 aa)) is the PAS domain. Disordered stretches follow at residues 360–389 (DPKG…QREM) and 409–436 (TEQR…LVPH). Positions 365 to 375 (SGDREEDDQKH) are enriched in basic and acidic residues. Residues 414–430 (QEGTTKLTRQPSKSEPS) are compositionally biased toward polar residues. The needed for transcriptional repression stretch occupies residues 555–701 (ASTTSCVWLG…SKGSDGIFLP (147 aa)). Residues Lys583 and Lys660 each participate in a glycyl lysine isopeptide (Lys-Gly) (interchain with G-Cter in SUMO2) cross-link.

Interacts with ARNT, ANKRA2, HDAC4 and HDAC5. Interacts with ARNT; forms a heterodimer with ARNT. Highly expressed in testis and weakly expressed in heart and liver. Highly expressed in small intestine and cecum in a male-dominant sexual dimorphic fashion.

It is found in the cytoplasm. It localises to the nucleus. Functionally, mediates dioxin toxicity and is involved in regulation of cell growth and differentiation. Represses the transcription activity of AHR by competing with this transcription factor for heterodimer formation with the ARNT and subsequently binding to the xenobiotic response element (XRE) sequence present in the promoter regulatory region of variety of genes. Represses CYP1A1 by binding the XRE sequence and recruiting ANKRA2, HDAC4 and/or HDAC5. Autoregulates its expression by associating with its own XRE site. This Rattus norvegicus (Rat) protein is Aryl hydrocarbon receptor repressor (Ahrr).